Consider the following 418-residue polypeptide: Isocitrate dehydrogenase [NADP] (418 aa).

T106 is an NADP(+) binding site. 5 residues coordinate D-threo-isocitrate: S115, N117, R121, R131, and R155. S115 carries the post-translational modification Phosphoserine. T193 is modified (phosphothreonine). Residue D309 coordinates Mg(2+). NADP(+)-binding positions include 341–347 (HGTAPKY), N354, Y393, and R397.

Belongs to the isocitrate and isopropylmalate dehydrogenases family. In terms of assembly, homodimer. The cofactor is Mg(2+). Mn(2+) serves as cofactor.

It localises to the secreted. The enzyme catalyses D-threo-isocitrate + NADP(+) = 2-oxoglutarate + CO2 + NADPH. In terms of biological role, catalyzes the oxidative decarboxylation of isocitrate to 2-oxoglutarate and carbon dioxide with the concomitant reduction of NADP(+). The chain is Isocitrate dehydrogenase [NADP] (icd) from Pseudomonas aeruginosa (strain UCBPP-PA14).